The sequence spans 30 residues: NADH-ubiquinone oxidoreductase 18 kDa subunit (30 aa).

In terms of assembly, complex I is composed of about 45 different subunits.

The protein resides in the mitochondrion inner membrane. It carries out the reaction a ubiquinone + NADH + 5 H(+)(in) = a ubiquinol + NAD(+) + 4 H(+)(out). In terms of biological role, transfer of electrons from NADH to the respiratory chain. The immediate electron acceptor for the enzyme is believed to be ubiquinone. In Solanum tuberosum (Potato), this protein is NADH-ubiquinone oxidoreductase 18 kDa subunit.